The chain runs to 548 residues: MPALRPLLPLLLLLRLTSGAGLLPGLGSHPGVCPNQLSPNLWVDAQSTCERECSRDQDCAAAEKCCINVCGLHSCVAARFPGSPAAPTTAASCEGFVCPQQGSDCDIWDGQPVCRCRDRCEKEPSFTCASDGLTYYNRCYMDAEACLRGLHLHIVPCKHVLSWPPSSPGPPETTARPTPGAAPVPPALYSSPSPQAVQVGGTASLHCDVSGRPPPAVTWEKQSHQRENLIMRPDQMYGNVVVTSIGQLVLYNARPEDAGLYTCTARNAAGLLRADFPLSVVQREPARDAAPSIPAPAECLPDVQACTGPTSPHLVLWHYDPQRGGCMTFPARGCDGAARGFETYEACQQACARGPGDACVLPAVQGPCRGWEPRWAYSPLLQQCHPFVYGGCEGNGNNFHSRESCEDACPVPRTPPCRACRLRSKLALSLCRSDFAIVGRLTEVLEEPEAAGGIARVALEDVLKDDKMGLKFLGTKYLEVTLSGMDWACPCPNMTAGDGPLVIMGEVRDGVAVLDAGSYVRAASEKRVKKILELLEKQACELLNRFQD.

An N-terminal signal peptide occupies residues 1–19 (MPALRPLLPLLLLLRLTSG). The region spanning 26-79 (LGSHPGVCPNQLSPNLWVDAQSTCERECSRDQDCAAAEKCCINVCGLHSCVAAR) is the WAP domain. Disulfide bonds link C33/C66, C49/C70, C53/C65, C59/C75, C116/C146, C120/C139, and C128/C157. The Kazal-like domain maps to 108 to 159 (WDGQPVCRCRDRCEKEPSFTCASDGLTYYNRCYMDAEACLRGLHLHIVPCKH). The segment at 164-184 (PPSSPGPPETTARPTPGAAPV) is disordered. An Ig-like C2-type domain is found at 186–279 (PALYSSPSPQ…GLLRADFPLS (94 aa)). Cystine bridges form between C207-C263, C299-C351, C306-C334, C326-C347, C359-C409, C368-C392, C384-C405, C417-C489, C420-C491, and C431-C540. BPTI/Kunitz inhibitor domains lie at 299–351 (CLPD…QQAC) and 359–409 (CVLP…EDAC). Residues 409–540 (CPVPRTPPCR…ILELLEKQAC (132 aa)) form the NTR domain. Residue N493 is glycosylated (N-linked (GlcNAc...) asparagine).

This sequence belongs to the WFIKKN family. In terms of tissue distribution, expressed in pancreas, kidney, liver, placenta, and lung.

It is found in the secreted. In terms of biological role, protease-inhibitor that contains multiple distinct protease inhibitor domains. Probably has serine protease- and metalloprotease-inhibitor activity. This Homo sapiens (Human) protein is WAP, Kazal, immunoglobulin, Kunitz and NTR domain-containing protein 1 (WFIKKN1).